The sequence spans 339 residues: Non-homologous end joining protein Ku (339 aa).

In terms of domain architecture, Ku spans 10–187 (ITFGLVNIPV…LPKATTGKPT (178 aa)). 2 disordered regions span residues 230-251 (DSGK…RQGA) and 263-339 (SLGQ…KHAA). Positions 267 to 277 (RGKEDKEDATP) are enriched in basic and acidic residues. Over residues 278 to 289 (ARRKAPARHAAA) the composition is skewed to basic residues. Residues 290–310 (RKQPAAKRAATPPAKRASTAA) show a composition bias toward low complexity.

The protein belongs to the prokaryotic Ku family. As to quaternary structure, homodimer. Interacts with LigD.

With LigD forms a non-homologous end joining (NHEJ) DNA repair enzyme, which repairs dsDNA breaks with reduced fidelity. Binds linear dsDNA with 5'- and 3'- overhangs but not closed circular dsDNA nor ssDNA. Recruits and stimulates the ligase activity of LigD. This chain is Non-homologous end joining protein Ku, found in Cupriavidus necator (strain ATCC 17699 / DSM 428 / KCTC 22496 / NCIMB 10442 / H16 / Stanier 337) (Ralstonia eutropha).